A 113-amino-acid chain; its full sequence is Large ribosomal subunit protein bL19 (113 aa).

Belongs to the bacterial ribosomal protein bL19 family.

Functionally, this protein is located at the 30S-50S ribosomal subunit interface and may play a role in the structure and function of the aminoacyl-tRNA binding site. In Mycobacteroides abscessus (strain ATCC 19977 / DSM 44196 / CCUG 20993 / CIP 104536 / JCM 13569 / NCTC 13031 / TMC 1543 / L948) (Mycobacterium abscessus), this protein is Large ribosomal subunit protein bL19.